We begin with the raw amino-acid sequence, 61 residues long: Small ribosomal subunit protein uS14 (61 aa).

Zn(2+) is bound by residues cysteine 24, cysteine 27, cysteine 40, and cysteine 43.

It belongs to the universal ribosomal protein uS14 family. Zinc-binding uS14 subfamily. In terms of assembly, part of the 30S ribosomal subunit. Contacts proteins S3 and S10. Requires Zn(2+) as cofactor.

Binds 16S rRNA, required for the assembly of 30S particles and may also be responsible for determining the conformation of the 16S rRNA at the A site. This Borreliella afzelii (strain PKo) (Borrelia afzelii) protein is Small ribosomal subunit protein uS14.